The chain runs to 182 residues: Cytidylate kinase (182 aa).

7–15 (GPPGSGKSS) provides a ligand contact to ATP.

It belongs to the cytidylate kinase family. Type 2 subfamily.

The protein resides in the cytoplasm. The enzyme catalyses CMP + ATP = CDP + ADP. The catalysed reaction is dCMP + ATP = dCDP + ADP. The polypeptide is Cytidylate kinase (cmk) (Sulfolobus acidocaldarius (strain ATCC 33909 / DSM 639 / JCM 8929 / NBRC 15157 / NCIMB 11770)).